Consider the following 426-residue polypeptide: Endoglucanase Z (426 aa).

An N-terminal signal peptide occupies residues Met-1–Ala-43. Residues Ser-44–Tyr-332 form a catalytic region. Glu-176 functions as the Proton donor in the catalytic mechanism. Glu-263 functions as the Nucleophile in the catalytic mechanism. The tract at residues Lys-333–Ala-366 is linker. Positions Ser-336–Asp-367 are disordered. The tract at residues Asp-367 to Asn-426 is cellulose-binding. Cys-368 and Cys-425 are oxidised to a cystine.

Belongs to the glycosyl hydrolase 5 (cellulase A) family.

Its subcellular location is the secreted. It catalyses the reaction Endohydrolysis of (1-&gt;4)-beta-D-glucosidic linkages in cellulose, lichenin and cereal beta-D-glucans.. In terms of biological role, represents 97% of the global cellulase activity. This Dickeya dadantii (strain 3937) (Erwinia chrysanthemi (strain 3937)) protein is Endoglucanase Z (celZ).